The primary structure comprises 356 residues: Terpene synthase 10 (356 aa).

The DDxx(x)D/E motif motif lies at 90-95 (DDYLDS). The NDxxSxxxD/E motif motif lies at 232–240 (NDAVSYAKE).

The protein belongs to the terpene synthase family.

The enzyme catalyses geranylgeranyl diphosphate = beta-araneosene + diphosphate. Functionally, terpene synthase that converts its substrate farnesyl diphosphate (FPP) into several unidentified sesquiterpenes. TPS10 also converts geranylgeranyl diphosphate (GGPP) into the diterpene beta-araneosene. The protein is Terpene synthase 10 of Dictyostelium purpureum (Slime mold).